Reading from the N-terminus, the 338-residue chain is Large ribosomal subunit protein uL10 (338 aa).

Over residues 298–308 (AAQQTQTQQST) the composition is skewed to low complexity. A disordered region spans residues 298-338 (AAQQTQTQQSTAEEKKEEKKEEEKKGPSEEEIGSGLASLFG). The span at 309–325 (AEEKKEEKKEEEKKGPS) shows a compositional bias: basic and acidic residues.

The protein belongs to the universal ribosomal protein uL10 family. Part of the 50S ribosomal subunit. Forms part of the ribosomal stalk which helps the ribosome interact with GTP-bound translation factors. Forms a heptameric L10(L12)2(L12)2(L12)2 complex, where L10 forms an elongated spine to which the L12 dimers bind in a sequential fashion.

Functionally, forms part of the ribosomal stalk, playing a central role in the interaction of the ribosome with GTP-bound translation factors. The sequence is that of Large ribosomal subunit protein uL10 from Saccharolobus islandicus (strain M.16.27) (Sulfolobus islandicus).